A 287-amino-acid polypeptide reads, in one-letter code: MTFSQMILNLQNYWQEQGCAIMQPYDMPAGAGTFHPATFLRSLGKKPWAAAYVAPSRRPTDGRYGENPNRLGAYYQFQVLIKPSPDNIQELYLKSLENLGFDLKSHDIRFVEDNWESPSLGAWGLGWEVWLDGMEVTQFTYFQQVGGIAVDLVSAEITYGLERIAMYLQNVDNVYDIVWSEFNGEKIKYADVHKQSEYEFSKYNFEVSDVKILNEQFENSYKECKNILEQGLALPAYDYCMLAAHTFNLLDARGAISVAQRQDYMLKIRELSKNCAEIYKKNLNETE.

Belongs to the class-II aminoacyl-tRNA synthetase family. As to quaternary structure, tetramer of two alpha and two beta subunits.

The protein resides in the cytoplasm. The catalysed reaction is tRNA(Gly) + glycine + ATP = glycyl-tRNA(Gly) + AMP + diphosphate. The sequence is that of Glycine--tRNA ligase alpha subunit from Campylobacter jejuni subsp. jejuni serotype O:6 (strain 81116 / NCTC 11828).